The primary structure comprises 642 residues: Threonine--tRNA ligase (642 aa).

One can recognise a TGS domain in the interval 1-61; it reads MPVITLPDGS…ENDATLAIIT (61 aa). Positions 243–534 are catalytic; it reads DHRKIGKQLD…LTEEFAGFFP (292 aa). 3 residues coordinate Zn(2+): Cys334, His385, and His511.

It belongs to the class-II aminoacyl-tRNA synthetase family. As to quaternary structure, homodimer. Requires Zn(2+) as cofactor.

The protein localises to the cytoplasm. It carries out the reaction tRNA(Thr) + L-threonine + ATP = L-threonyl-tRNA(Thr) + AMP + diphosphate + H(+). Catalyzes the attachment of threonine to tRNA(Thr) in a two-step reaction: L-threonine is first activated by ATP to form Thr-AMP and then transferred to the acceptor end of tRNA(Thr). Also edits incorrectly charged L-seryl-tRNA(Thr). This Salmonella choleraesuis (strain SC-B67) protein is Threonine--tRNA ligase.